A 426-amino-acid polypeptide reads, in one-letter code: UDP-N-acetylglucosamine--N-acetylmuramyl-(pentapeptide) pyrophosphoryl-undecaprenol N-acetylglucosamine transferase (426 aa).

UDP-N-acetyl-alpha-D-glucosamine is bound by residues 28–30 (TGG), asparagine 140, arginine 176, serine 204, isoleucine 257, and glutamine 302. A disordered region spans residues 369 to 388 (AGNGPSGMGNGHSSEQPQER).

Belongs to the glycosyltransferase 28 family. MurG subfamily.

The protein localises to the cell inner membrane. The enzyme catalyses di-trans,octa-cis-undecaprenyl diphospho-N-acetyl-alpha-D-muramoyl-L-alanyl-D-glutamyl-meso-2,6-diaminopimeloyl-D-alanyl-D-alanine + UDP-N-acetyl-alpha-D-glucosamine = di-trans,octa-cis-undecaprenyl diphospho-[N-acetyl-alpha-D-glucosaminyl-(1-&gt;4)]-N-acetyl-alpha-D-muramoyl-L-alanyl-D-glutamyl-meso-2,6-diaminopimeloyl-D-alanyl-D-alanine + UDP + H(+). It participates in cell wall biogenesis; peptidoglycan biosynthesis. Functionally, cell wall formation. Catalyzes the transfer of a GlcNAc subunit on undecaprenyl-pyrophosphoryl-MurNAc-pentapeptide (lipid intermediate I) to form undecaprenyl-pyrophosphoryl-MurNAc-(pentapeptide)GlcNAc (lipid intermediate II). In Xanthomonas axonopodis pv. citri (strain 306), this protein is UDP-N-acetylglucosamine--N-acetylmuramyl-(pentapeptide) pyrophosphoryl-undecaprenol N-acetylglucosamine transferase.